A 188-amino-acid chain; its full sequence is MVDNMFIVFEGIDGSGKTTQSKLLAKKMDAFWTYEPSNSLVGKIIREILSGKTEVDNKTLALLFAADRIEHTKLIKEELKKRDVVCDRYLYSSIAYQSVAGVDENFIKSINRYALKPDIVFLLIVDIETALKRVKTKDIFEKKDFLKKVQDKYLELAEEYNFIVIDTTKKSVEEVHNEIIGYLKNIPH.

11 to 18 provides a ligand contact to ATP; that stretch reads GIDGSGKT.

The protein belongs to the thymidylate kinase family.

It carries out the reaction dTMP + ATP = dTDP + ADP. In Methanocaldococcus jannaschii (strain ATCC 43067 / DSM 2661 / JAL-1 / JCM 10045 / NBRC 100440) (Methanococcus jannaschii), this protein is Probable thymidylate kinase (tmk).